A 292-amino-acid chain; its full sequence is UPF0282 protein MJ1629 (292 aa).

It belongs to the UPF0282 family.

In Methanocaldococcus jannaschii (strain ATCC 43067 / DSM 2661 / JAL-1 / JCM 10045 / NBRC 100440) (Methanococcus jannaschii), this protein is UPF0282 protein MJ1629.